Consider the following 835-residue polypeptide: Serine/threonine-protein kinase TNNI3K (835 aa).

A lipid anchor (N-myristoyl glycine) is attached at glycine 2. Residues 21–50 (SESYAIIIERLEDNLQIKENEFQELRHIFG) adopt a coiled-coil conformation. ANK repeat units lie at residues 66–96 (RGLSLLHLCCVCGGNKSHIRALMLKGLRPSR), 100–129 (NGFPALHLAVYKDSPELITSLLHSGADVQQ), 133–162 (GGLTALHIAAIAGHPEAAEVLLQHGANVNV), 166–195 (VFFTPLHIAAYYGHEQVTSVLLKFGADVNV), 199–228 (VGDRPLHLASAKGFFNIVKLLVEEGSKADV), 234–263 (EDHVPLHFCSRFGHHNIVSYLLQSDLEVQP), 269–298 (YGDTPLHLACYNGNFEVAKEIVQVTGTESL), 304–335 (FSETAFHSACTYGKNIDLVKFLLDQNAVNINH), 339–368 (DGHTGLHSACYHGHIRLVQFLLDNGADMNL), and 381–410 (DEQTCLMWAYEKGHDAIVTLLKHYKRPQEE). The Protein kinase domain maps to 463-723 (IEFHEIIGSG…EVVSKLEECL (261 aa)). ATP contacts are provided by residues 469 to 477 (IGSGSFGKV) and lysine 490. Residue aspartate 588 is the Proton acceptor of the active site.

This sequence belongs to the protein kinase superfamily. TKL Ser/Thr protein kinase family. MAP kinase kinase kinase subfamily. In terms of assembly, interacts with TNNI3, ACTC, ACTA1, MYBPC3, AIP, FABP3 and HADHB. It depends on Mg(2+) as a cofactor. Autophosphorylated.

The protein resides in the nucleus. The protein localises to the cytoplasm. It catalyses the reaction L-seryl-[protein] + ATP = O-phospho-L-seryl-[protein] + ADP + H(+). The enzyme catalyses L-threonyl-[protein] + ATP = O-phospho-L-threonyl-[protein] + ADP + H(+). Its function is as follows. May play a role in cardiac physiology. The protein is Serine/threonine-protein kinase TNNI3K of Rattus norvegicus (Rat).